The primary structure comprises 121 residues: Large ribosomal subunit protein uL18 (121 aa).

Belongs to the universal ribosomal protein uL18 family. Part of the 50S ribosomal subunit; part of the 5S rRNA/L5/L18/L25 subcomplex. Contacts the 5S and 23S rRNAs.

Its function is as follows. This is one of the proteins that bind and probably mediate the attachment of the 5S RNA into the large ribosomal subunit, where it forms part of the central protuberance. The sequence is that of Large ribosomal subunit protein uL18 from Verminephrobacter eiseniae (strain EF01-2).